We begin with the raw amino-acid sequence, 719 residues long: MFNKVTKTFQYGQHSVVLETGEMARQASGAVLVSVEDTVVLATVVAAKKAKAGQDFFPLTVDYIEKTYAAGRIPGGFFKREGKPSEKETLTSRLIDRPLRPLFPEGFYNDVQVVIHTLSVNPDIDPDIPAMIGASAALAISGIPFNGPIGAARVGYVDGQYVLNPTATQLKSSKMDLVVAGTENAVLMVESEAKQLSEEIMLGGVVFGHEQMQAAINAIHDLVRDAGKPDWDWQPAPKNEALIAAVSAAAQEGLNAAYQIREKQARTTKLREVYAAVQAAMAEQAAQAGQPAPDSVGVDNILFDLEARIVRSQILNGEPRIDGRDTRTVRPISIRLGVLPRAHGSALFTRGETQALVVATLGTKQDEQIIDALMGEYRDRFMLHYNMPPFATGETGRIGVPKRREIGHGRLAKRALLPLLPAPEDFQYTIRLVSEITESNGSSSMASVCGGSLAMMDAGVPTNDHVAGVAMGLILDSGKFAVLTDILGDEDHLGDMDFKVAGTETGITALQMDIKIQGITKEIMQVALAQAREGRLHILGKMRDALEGSRTELSAFAPRMLTIKINPEKIRDVIGKGGATIRALTEETGTQIDISDDGTIVIASVDETQAKEAQRRIVELTADVEVGQIYDGSVLRLLDFGAIVQVLPGRDGLLHISEIANYRIANINDVLKVGQPVRVKVIEADDKGRLRLSIKAIGGIEQQQSGTAEPAAQSEPQAE.

Positions 491 and 497 each coordinate Mg(2+). The region spanning 558-617 is the KH domain; it reads PRMLTIKINPEKIRDVIGKGGATIRALTEETGTQIDISDDGTIVIASVDETQAKEAQRRI. In terms of domain architecture, S1 motif spans 627 to 695; it reads GQIYDGSVLR…DKGRLRLSIK (69 aa).

Belongs to the polyribonucleotide nucleotidyltransferase family. The cofactor is Mg(2+).

Its subcellular location is the cytoplasm. It catalyses the reaction RNA(n+1) + phosphate = RNA(n) + a ribonucleoside 5'-diphosphate. Functionally, involved in mRNA degradation. Catalyzes the phosphorolysis of single-stranded polyribonucleotides processively in the 3'- to 5'-direction. This is Polyribonucleotide nucleotidyltransferase from Bordetella parapertussis (strain 12822 / ATCC BAA-587 / NCTC 13253).